Reading from the N-terminus, the 112-residue chain is Citrate synthase (112 aa).

Active-site residues include H39 and D97.

This sequence belongs to the citrate synthase family.

The enzyme catalyses oxaloacetate + acetyl-CoA + H2O = citrate + CoA + H(+). It functions in the pathway carbohydrate metabolism; tricarboxylic acid cycle; isocitrate from oxaloacetate: step 1/2. This is Citrate synthase (gltA) from Bartonella vinsonii subsp. berkhoffii.